The chain runs to 127 residues: Large ribosomal subunit protein bL17 (127 aa).

It belongs to the bacterial ribosomal protein bL17 family. In terms of assembly, part of the 50S ribosomal subunit. Contacts protein L32.

In Legionella pneumophila (strain Paris), this protein is Large ribosomal subunit protein bL17.